A 218-amino-acid chain; its full sequence is Pyrrolidone-carboxylate peptidase 2 (218 aa).

Active-site residues include E83, C146, and H170.

This sequence belongs to the peptidase C15 family. As to quaternary structure, homotetramer.

The protein localises to the cytoplasm. It carries out the reaction Release of an N-terminal pyroglutamyl group from a polypeptide, the second amino acid generally not being Pro.. Its function is as follows. Removes 5-oxoproline from various penultimate amino acid residues except L-proline. The polypeptide is Pyrrolidone-carboxylate peptidase 2 (Photorhabdus laumondii subsp. laumondii (strain DSM 15139 / CIP 105565 / TT01) (Photorhabdus luminescens subsp. laumondii)).